We begin with the raw amino-acid sequence, 608 residues long: Glutamyl-tRNA(Gln) amidotransferase subunit E (608 aa).

Residues 401 to 428 are disordered; sequence PEETRAANPDGTTRFLRPRPGAARMYPE.

The protein belongs to the GatB/GatE family. GatE subfamily. Heterodimer of GatD and GatE.

It carries out the reaction L-glutamyl-tRNA(Gln) + L-glutamine + ATP + H2O = L-glutaminyl-tRNA(Gln) + L-glutamate + ADP + phosphate + H(+). Functionally, allows the formation of correctly charged Gln-tRNA(Gln) through the transamidation of misacylated Glu-tRNA(Gln) in organisms which lack glutaminyl-tRNA synthetase. The reaction takes place in the presence of glutamine and ATP through an activated gamma-phospho-Glu-tRNA(Gln). The GatDE system is specific for glutamate and does not act on aspartate. The sequence is that of Glutamyl-tRNA(Gln) amidotransferase subunit E from Pyrobaculum arsenaticum (strain DSM 13514 / JCM 11321 / PZ6).